The primary structure comprises 72 residues: Translation initiation factor IF-1 (72 aa).

Residues 1-72 (MSKEDVIELE…TRGRIVWRSK (72 aa)) form the S1-like domain.

Belongs to the IF-1 family. As to quaternary structure, component of the 30S ribosomal translation pre-initiation complex which assembles on the 30S ribosome in the order IF-2 and IF-3, IF-1 and N-formylmethionyl-tRNA(fMet); mRNA recruitment can occur at any time during PIC assembly.

The protein localises to the cytoplasm. Its function is as follows. One of the essential components for the initiation of protein synthesis. Stabilizes the binding of IF-2 and IF-3 on the 30S subunit to which N-formylmethionyl-tRNA(fMet) subsequently binds. Helps modulate mRNA selection, yielding the 30S pre-initiation complex (PIC). Upon addition of the 50S ribosomal subunit IF-1, IF-2 and IF-3 are released leaving the mature 70S translation initiation complex. The polypeptide is Translation initiation factor IF-1 (Caldicellulosiruptor saccharolyticus (strain ATCC 43494 / DSM 8903 / Tp8T 6331)).